The following is a 167-amino-acid chain: Transcriptional regulator MraZ (167 aa).

SpoVT-AbrB domains lie at 8–51 (ESNH…YGDH) and 92–135 (SFPT…NPAT).

This sequence belongs to the MraZ family. As to quaternary structure, forms oligomers.

It is found in the cytoplasm. It localises to the nucleoid. The sequence is that of Transcriptional regulator MraZ from Ruegeria pomeroyi (strain ATCC 700808 / DSM 15171 / DSS-3) (Silicibacter pomeroyi).